Consider the following 443-residue polypeptide: Leucine-rich repeat-containing protein 17 (443 aa).

An N-terminal signal peptide occupies residues 1–15 (MRIVAILLLFCLCRA). The segment at 20–48 (KSSPGVLRSQGNPSRSHGRGGRRGSSPVK) is disordered. LRR repeat units lie at residues 84–105 (DLLHMLLARNKIRVLKNNMFAK), 108–129 (RLKSLDLQQNEISKIESEAFFG), and 132–153 (KLTTLLLQHNQIKVLTEEAFIY). The LRRCT 1 domain occupies 165–216 (NPWHCTCELETLISMLQIPRNRNLGNYAKCGSPPALRNKKLLQLKPQELCDE). Residues 229–270 (SGIPAVIRPEADSTLCHNYVFPIQTLDCKRKELKKVPSNIPP) enclose the LRRNT domain. 3 LRR repeats span residues 271–292 (DIVKLDLSSNKIRQLRPKEFED), 295–316 (ELKKLNLSSNGIEFIDPAAFLG), and 319–342 (HLEELDLSNNSLQNFDYGVLEDLY). The region spanning 352–404 (NPWRCDYSIHYLYYWLKHHYNVHYNGLECKTPEEYKGWSVGKYVRSYYEECPK) is the LRRCT 2 domain.

As to expression, expressed in osteoblasts, spleen, lung and heart.

The protein resides in the secreted. The protein localises to the extracellular space. Involved in bone homeostasis. Acts as a negative regulator of RANKL-induced osteoclast precursor differentiation from bone marrow precursors. The polypeptide is Leucine-rich repeat-containing protein 17 (Lrrc17) (Mus musculus (Mouse)).